The primary structure comprises 534 residues: Benzaldehyde dehydrogenase, mitochondrial (534 aa).

The transit peptide at 1–29 (MAAHRFSSLLSRSVPLLSRGGKQSYLGRG) directs the protein to the mitochondrion. NAD(+) is bound by residues 199–202 (IPWN), 225–228 (KTAE), 258–259 (GP), 278–279 (GS), and 301–303 (ELG). Residue Glu301 is the Proton acceptor of the active site. The active-site Nucleophile is the Cys335. NAD(+)-binding positions include 381–385 (DQFEK) and 432–434 (EIF).

Belongs to the aldehyde dehydrogenase family. In terms of assembly, homotetramer. Expressed predominantly in the upper and lower flower petal lobes, and, at low levels, in flower tubes, pistils, stamens and sepals.

Its subcellular location is the mitochondrion. The enzyme catalyses an aldehyde + NAD(+) + H2O = a carboxylate + NADH + 2 H(+). It carries out the reaction acetaldehyde + NAD(+) + H2O = acetate + NADH + 2 H(+). It catalyses the reaction benzaldehyde + NAD(+) + H2O = benzoate + NADH + 2 H(+). The catalysed reaction is 2-phenylacetaldehyde + NAD(+) + H2O = 2-phenylacetate + NADH + 2 H(+). It functions in the pathway aromatic compound metabolism. With respect to regulation, inhibited by disulfiram. Component of the floral volatile benzenoid/phenylpropanoid (FVBP) biosynthetic pathway. Catalyzes the oxidation of benzaldehyde to benzoic acid (BA). Capable of oxidizing a broad spectrum of aliphatic aldehydes; increased carbon chain length results in a decrease in its efficiency. The sequence is that of Benzaldehyde dehydrogenase, mitochondrial from Antirrhinum majus (Garden snapdragon).